Reading from the N-terminus, the 314-residue chain is Malate dehydrogenase (314 aa).

Residue 9-15 (IGVGNVG) participates in NAD(+) binding. Residues arginine 84 and arginine 90 each coordinate substrate. NAD(+)-binding positions include asparagine 97 and 120-122 (ISN). Positions 122 and 153 each coordinate substrate. The active-site Proton acceptor is the histidine 177.

Belongs to the LDH/MDH superfamily.

The catalysed reaction is (S)-malate + NAD(+) = oxaloacetate + NADH + H(+). Its function is as follows. Catalyzes the reversible oxidation of malate to oxaloacetate. This is Malate dehydrogenase from Aliarcobacter butzleri (strain RM4018) (Arcobacter butzleri).